A 415-amino-acid chain; its full sequence is Transposase for insertion sequence element IS1081 (415 aa).

Belongs to the transposase mutator family.

Functionally, required for the transposition of the insertion element. The polypeptide is Transposase for insertion sequence element IS1081 (Mycobacterium bovis (strain ATCC BAA-935 / AF2122/97)).